A 316-amino-acid chain; its full sequence is Thiamine-monophosphate kinase (316 aa).

Mg(2+) is bound by residues aspartate 26, threonine 49, and aspartate 50. Aspartate 57 contacts substrate. A Mg(2+)-binding site is contributed by aspartate 79. ATP contacts are provided by residues tyrosine 109, glycine 126 to aspartate 127, and arginine 151. Aspartate 127 serves as a coordination point for Mg(2+). Aspartate 198 provides a ligand contact to Mg(2+). Serine 200 is an ATP binding site. Position 201 (aspartate 201) interacts with Mg(2+). The substrate site is built by glutamate 251 and phenylalanine 305.

This sequence belongs to the thiamine-monophosphate kinase family.

The enzyme catalyses thiamine phosphate + ATP = thiamine diphosphate + ADP. Its pathway is cofactor biosynthesis; thiamine diphosphate biosynthesis; thiamine diphosphate from thiamine phosphate: step 1/1. Its function is as follows. Catalyzes the ATP-dependent phosphorylation of thiamine-monophosphate (TMP) to form thiamine-pyrophosphate (TPP), the active form of vitamin B1. The polypeptide is Thiamine-monophosphate kinase (Rhodopirellula baltica (strain DSM 10527 / NCIMB 13988 / SH1)).